Reading from the N-terminus, the 343-residue chain is Protein RecA (343 aa).

65–72 (GPESSGKT) contacts ATP.

It belongs to the RecA family.

The protein localises to the cytoplasm. Can catalyze the hydrolysis of ATP in the presence of single-stranded DNA, the ATP-dependent uptake of single-stranded DNA by duplex DNA, and the ATP-dependent hybridization of homologous single-stranded DNAs. It interacts with LexA causing its activation and leading to its autocatalytic cleavage. The sequence is that of Protein RecA from Campylobacter jejuni subsp. jejuni serotype O:6 (strain 81116 / NCTC 11828).